The primary structure comprises 407 residues: Glucose-1-phosphate adenylyltransferase 2 (407 aa).

Alpha-D-glucose 1-phosphate-binding positions include tyrosine 97, glycine 162, 177–178 (EK), and serine 195.

Belongs to the bacterial/plant glucose-1-phosphate adenylyltransferase family. As to quaternary structure, homotetramer.

The enzyme catalyses alpha-D-glucose 1-phosphate + ATP + H(+) = ADP-alpha-D-glucose + diphosphate. The protein operates within glycan biosynthesis; glycogen biosynthesis. Functionally, involved in the biosynthesis of ADP-glucose, a building block required for the elongation reactions to produce glycogen. Catalyzes the reaction between ATP and alpha-D-glucose 1-phosphate (G1P) to produce pyrophosphate and ADP-Glc. The sequence is that of Glucose-1-phosphate adenylyltransferase 2 from Vibrio cholerae serotype O1 (strain ATCC 39315 / El Tor Inaba N16961).